A 274-amino-acid polypeptide reads, in one-letter code: Kit ligand (274 aa).

A signal peptide spans 1 to 25 (MKKTQTWIITCIYLQLLLFNPLVKT). Topologically, residues 26-215 (KGICGKRVTD…SNSIGDSNLQ (190 aa)) are extracellular. Intrachain disulfides connect Cys29-Cys114 and Cys68-Cys164. N-linked (GlcNAc...) asparagine glycosylation is found at Asn90, Asn97, Asn145, and Asn196. A helical membrane pass occupies residues 216–238 (WAAMALPAFFSLVIGFAFGALYW). At 239–274 (KKKQPNLTRTVENIQINEEDNEISMLQEKEREFQEV) the chain is on the cytoplasmic side.

The protein belongs to the SCF family. Homodimer, non-covalently linked. In terms of processing, a soluble form is produced by proteolytic processing of the extracellular domain.

It localises to the cytoplasm. The protein localises to the cytoskeleton. Its subcellular location is the cell membrane. The protein resides in the cell projection. It is found in the lamellipodium. It localises to the filopodium. The protein localises to the secreted. In terms of biological role, stimulates the proliferation of mast cells. Able to augment the proliferation of both myeloid and lymphoid hematopoietic progenitors in bone marrow culture. Also mediates cell-cell adhesion. Acts synergistically with other cytokines, probably interleukins. This chain is Kit ligand (KITLG), found in Canis lupus familiaris (Dog).